Reading from the N-terminus, the 503-residue chain is Cobyric acid synthase (503 aa).

The GATase cobBQ-type domain maps to 251-450; sequence DLDIAVIRLP…IHGIFENAAF (200 aa). The Nucleophile role is filled by Cys331. The active site involves His442.

The protein belongs to the CobB/CobQ family. CobQ subfamily.

The protein operates within cofactor biosynthesis; adenosylcobalamin biosynthesis. Functionally, catalyzes amidations at positions B, D, E, and G on adenosylcobyrinic A,C-diamide. NH(2) groups are provided by glutamine, and one molecule of ATP is hydrogenolyzed for each amidation. The sequence is that of Cobyric acid synthase from Dehalococcoides mccartyi (strain CBDB1).